The chain runs to 803 residues: Exocyst complex component 6 (803 aa).

This sequence belongs to the SEC15 family. As to quaternary structure, the exocyst complex is composed of EXOC1, EXOC2, EXOC3, EXOC4, EXOC5, EXOC6, EXOC7 and EXOC8. Interacts with CNTRL. Interacts with RAB11A in a GTP-dependent manner.

Its subcellular location is the cytoplasm. It localises to the perinuclear region. The protein resides in the cell projection. The protein localises to the growth cone. It is found in the midbody. Its subcellular location is the midbody ring. Its function is as follows. Component of the exocyst complex involved in the docking of exocytic vesicles with fusion sites on the plasma membrane. Together with RAB11A, RAB3IP, RAB8A, PARD3, PRKCI, ANXA2, CDC42 and DNMBP promotes transcytosis of PODXL to the apical membrane initiation sites (AMIS), apical surface formation and lumenogenesis. The chain is Exocyst complex component 6 (EXOC6) from Canis lupus familiaris (Dog).